The following is a 320-amino-acid chain: Reticulocalbin-2 (320 aa).

A signal peptide spans 1–25 (MRLGPRPAVLGLLLLLLLYAAVAGA). EF-hand domains lie at 64–99 (EQQR…SFKH) and 100–135 (YAMQ…RVID). The Ca(2+) site is built by aspartate 77, aspartate 79, aspartate 81, glutamate 88, aspartate 113, asparagine 115, aspartate 117, threonine 119, and glutamate 124. Position 140 is a phosphothreonine (threonine 140). EF-hand domains follow at residues 150–185 (FRQL…HPEE), 189–224 (MTEF…DPTA), 230–265 (WILV…NNQG), and 266–301 (IAQE…FLTS). Residues aspartate 167, glutamate 176, aspartate 202, asparagine 204, aspartate 206, glutamate 213, aspartate 243, aspartate 245, aspartate 247, arginine 249, glutamate 254, aspartate 279, asparagine 281, aspartate 283, lysine 285, and glutamate 290 each contribute to the Ca(2+) site. The Prevents secretion from ER signature appears at 317 to 320 (HDEL).

This sequence belongs to the CREC family. Binds the snake venom phospholipase complex taipoxin. In terms of tissue distribution, ubiquitous.

It localises to the endoplasmic reticulum lumen. Its function is as follows. Not known. Binds calcium. The chain is Reticulocalbin-2 (Rcn2) from Rattus norvegicus (Rat).